A 321-amino-acid polypeptide reads, in one-letter code: MTSTRLPQNIGEACQQANNLGVNAPELARFQDEPPQMASGDVGKSGYLRLGFARRGDRSILAQMKRRVPYLVQRALYWDEALPQMPCVFMISTSGCILQGDRLALDIHVAPEAFGHVTTQSATKIHSMENNYAAQVQTIQIEQGGYLEMMPDPVIPHSGSRFITDTQITIHPTATLIYSEIIMSGRKYHLADQGFKFDVYSSRITATDFDGKILFTERYVLEPKKQSLNSVGVMGPFHVFGNVILLTPQLHHDRILARMAPQYDAETGIASGTSRLPHQCGLIFKVLGKETYQVKAGIRLFWRIAREEILGVTLPEPFIWR.

This sequence belongs to the UreD family. In terms of assembly, ureD, UreF and UreG form a complex that acts as a GTP-hydrolysis-dependent molecular chaperone, activating the urease apoprotein by helping to assemble the nickel containing metallocenter of UreC. The UreE protein probably delivers the nickel.

It localises to the cytoplasm. In terms of biological role, required for maturation of urease via the functional incorporation of the urease nickel metallocenter. The sequence is that of Urease accessory protein UreD from Photorhabdus laumondii subsp. laumondii (strain DSM 15139 / CIP 105565 / TT01) (Photorhabdus luminescens subsp. laumondii).